A 341-amino-acid chain; its full sequence is Phosphoribosylformylglycinamidine cyclo-ligase (341 aa).

The protein belongs to the AIR synthase family.

It localises to the cytoplasm. The catalysed reaction is 2-formamido-N(1)-(5-O-phospho-beta-D-ribosyl)acetamidine + ATP = 5-amino-1-(5-phospho-beta-D-ribosyl)imidazole + ADP + phosphate + H(+). It participates in purine metabolism; IMP biosynthesis via de novo pathway; 5-amino-1-(5-phospho-D-ribosyl)imidazole from N(2)-formyl-N(1)-(5-phospho-D-ribosyl)glycinamide: step 2/2. The protein is Phosphoribosylformylglycinamidine cyclo-ligase of Xanthomonas axonopodis pv. citri (strain 306).